Reading from the N-terminus, the 886-residue chain is Protein translocase subunit SecA (886 aa).

ATP is bound by residues Gln-81, 99–103 (GEGKT), and Asp-489.

The protein belongs to the SecA family.

It localises to the plastid. The protein localises to the chloroplast stroma. It is found in the chloroplast thylakoid membrane. The enzyme catalyses ATP + H2O + cellular proteinSide 1 = ADP + phosphate + cellular proteinSide 2.. Functionally, has a central role in coupling the hydrolysis of ATP to the transfer of proteins across the thylakoid membrane. In Phaeodactylum tricornutum (strain CCAP 1055/1), this protein is Protein translocase subunit SecA.